The primary structure comprises 359 residues: 3-dehydroquinate synthase (359 aa).

NAD(+)-binding positions include 71-76 (DGEAYK), 105-109 (GVVGD), 129-130 (TT), lysine 142, and lysine 151. Residues glutamate 184, histidine 247, and histidine 264 each contribute to the Zn(2+) site.

This sequence belongs to the sugar phosphate cyclases superfamily. Dehydroquinate synthase family. It depends on Co(2+) as a cofactor. Zn(2+) is required as a cofactor. Requires NAD(+) as cofactor.

It localises to the cytoplasm. It catalyses the reaction 7-phospho-2-dehydro-3-deoxy-D-arabino-heptonate = 3-dehydroquinate + phosphate. It participates in metabolic intermediate biosynthesis; chorismate biosynthesis; chorismate from D-erythrose 4-phosphate and phosphoenolpyruvate: step 2/7. In terms of biological role, catalyzes the conversion of 3-deoxy-D-arabino-heptulosonate 7-phosphate (DAHP) to dehydroquinate (DHQ). The chain is 3-dehydroquinate synthase from Burkholderia orbicola (strain MC0-3).